A 101-amino-acid polypeptide reads, in one-letter code: Urease subunit beta (101 aa).

Belongs to the urease beta subunit family. Heterotrimer of UreA (gamma), UreB (beta) and UreC (alpha) subunits. Three heterotrimers associate to form the active enzyme.

It localises to the cytoplasm. The catalysed reaction is urea + 2 H2O + H(+) = hydrogencarbonate + 2 NH4(+). Its pathway is nitrogen metabolism; urea degradation; CO(2) and NH(3) from urea (urease route): step 1/1. In Rhizobium johnstonii (strain DSM 114642 / LMG 32736 / 3841) (Rhizobium leguminosarum bv. viciae), this protein is Urease subunit beta.